The following is a 212-amino-acid chain: MAIGLVGKKCGMTRVFTEAGASIPVTVVEISANRITQVKNTDVDGYQAIQVTTGTRRDSRVTAAQKGHFAKAGVAAGRGVWEFRANDSDLEGREIGGEILADLFEQGQMVDVTGNSKGKGFQGGVKRHNFSMQDATHGNSVSHRAIGSTGQNQSPGKVFKGKKMPGQMGNKRVTVQGLEVISVDVENGLLVIKGAIPGATGGDVIVRPSVKA.

Positions 140–155 (SVSHRAIGSTGQNQSP) are enriched in polar residues. A disordered region spans residues 140-166 (SVSHRAIGSTGQNQSPGKVFKGKKMPG). Glutamine 153 bears the N5-methylglutamine mark.

It belongs to the universal ribosomal protein uL3 family. As to quaternary structure, part of the 50S ribosomal subunit. Forms a cluster with proteins L14 and L19. Post-translationally, methylated by PrmB.

In terms of biological role, one of the primary rRNA binding proteins, it binds directly near the 3'-end of the 23S rRNA, where it nucleates assembly of the 50S subunit. The protein is Large ribosomal subunit protein uL3 of Psychrobacter cryohalolentis (strain ATCC BAA-1226 / DSM 17306 / VKM B-2378 / K5).